The primary structure comprises 177 residues: Large ribosomal subunit protein uL6 (177 aa).

This sequence belongs to the universal ribosomal protein uL6 family. As to quaternary structure, part of the 50S ribosomal subunit.

This protein binds to the 23S rRNA, and is important in its secondary structure. It is located near the subunit interface in the base of the L7/L12 stalk, and near the tRNA binding site of the peptidyltransferase center. In Klebsiella pneumoniae subsp. pneumoniae (strain ATCC 700721 / MGH 78578), this protein is Large ribosomal subunit protein uL6.